The primary structure comprises 412 residues: MSYIEKKDKVVYDAIQKEFQRQNSNIELIASENFVSQAVMEAQGSVLTNKYAEGYPGRRYYGGCEHVDVTESIAIERAKALFGAEHVNVQPHSGSQANMAVYLVALEMGDTVLGMNLSHGGHLTHGATVNFSGKFYHFVEYGVDQENELINYDEVRRLAIEHQPKLIVAGASAYSRTIDFKKFKEIADEVGAKLMVDMAHIAGLVAAGLHPNPVEYADFVTTTTHKTLRGPRGGMILCKEEYKKDIDKTIFPGIQGGPLEHVIAAKAVAFGEALNDDFKDYQNQVIKNAQALAQTLIEEGFRVVSGGTDNHLVAVDVKGSINMTGKLAEETLDKVGITCNKNTIPFDKEKPFVTSGVRLGTPAATTRGFDESAFVEVAKIISLALNNYDNDTKLNEAKERVHALTSKYPLYN.

(6S)-5,6,7,8-tetrahydrofolate is bound by residues leucine 117 and glycine 121–leucine 123. Lysine 226 is modified (N6-(pyridoxal phosphate)lysine).

It belongs to the SHMT family. Homodimer. Pyridoxal 5'-phosphate serves as cofactor.

It localises to the cytoplasm. It carries out the reaction (6R)-5,10-methylene-5,6,7,8-tetrahydrofolate + glycine + H2O = (6S)-5,6,7,8-tetrahydrofolate + L-serine. It functions in the pathway one-carbon metabolism; tetrahydrofolate interconversion. It participates in amino-acid biosynthesis; glycine biosynthesis; glycine from L-serine: step 1/1. Catalyzes the reversible interconversion of serine and glycine with tetrahydrofolate (THF) serving as the one-carbon carrier. This reaction serves as the major source of one-carbon groups required for the biosynthesis of purines, thymidylate, methionine, and other important biomolecules. Also exhibits THF-independent aldolase activity toward beta-hydroxyamino acids, producing glycine and aldehydes, via a retro-aldol mechanism. The protein is Serine hydroxymethyltransferase of Staphylococcus epidermidis (strain ATCC 35984 / DSM 28319 / BCRC 17069 / CCUG 31568 / BM 3577 / RP62A).